Reading from the N-terminus, the 465-residue chain is Protein maelstrom (465 aa).

A DNA-binding region (HMG box) is located at residues A2–N69. The segment at M415–P440 is disordered.

Belongs to the maelstrom family.

The protein resides in the cytoplasm. Its subcellular location is the nucleus. Functionally, involved both in the piRNA and miRNA metabolic processes. As a component of the meiotic nuage, plays a central role during oogenesis by repressing transposable elements and preventing their mobilization, which is essential for the germline integrity. Repression of transposable elements is mediated via the piRNA metabolic process, which mediates the repression of transposable elements during meiosis by forming complexes composed of piRNAs and Piwi proteins and governs the repression of transposons. As a nuclear component, it is required for proper differentiation in the germline stem cell (GSC) lineage by repressing microRNA-7 (miR-7), thereby acting as an indirect regulator of bag-of-marbles (Bam). Acts by binding to the promoter of miR-7 gene and repressing its expression; miR-7 repression alleviates the Bam repression by miR-7, thereby allowing differentiation in the germline stem cell (GSC) lineage. The chain is Protein maelstrom (mael) from Drosophila yakuba (Fruit fly).